A 238-amino-acid chain; its full sequence is Probable xyloglucan-specific endo-beta-1,4-glucanase A (238 aa).

The signal sequence occupies residues 1 to 18; sequence MKLSLSVALSLAAATAQA. N-linked (GlcNAc...) asparagine glycosylation is found at N106 and N171.

It belongs to the glycosyl hydrolase 12 (cellulase H) family.

The protein resides in the secreted. It catalyses the reaction xyloglucan + H2O = xyloglucan oligosaccharides.. Functionally, catalyzes endohydrolysis of 1,4-beta-D-glucosidic linkages in xyloglucan with retention of the beta-configuration of the glycosyl residues. Specific for xyloglucan and does not hydrolyze other cell wall components. The polypeptide is Probable xyloglucan-specific endo-beta-1,4-glucanase A (xgeA) (Aspergillus fumigatus (strain CBS 144.89 / FGSC A1163 / CEA10) (Neosartorya fumigata)).